Consider the following 135-residue polypeptide: Ribonuclease P protein component (135 aa).

Belongs to the RnpA family. In terms of assembly, consists of a catalytic RNA component (M1 or rnpB) and a protein subunit.

The catalysed reaction is Endonucleolytic cleavage of RNA, removing 5'-extranucleotides from tRNA precursor.. Its function is as follows. RNaseP catalyzes the removal of the 5'-leader sequence from pre-tRNA to produce the mature 5'-terminus. It can also cleave other RNA substrates such as 4.5S RNA. The protein component plays an auxiliary but essential role in vivo by binding to the 5'-leader sequence and broadening the substrate specificity of the ribozyme. In Xylella fastidiosa (strain 9a5c), this protein is Ribonuclease P protein component.